The primary structure comprises 264 residues: Hemin import ATP-binding protein HmuV (264 aa).

The region spanning 2-241 (IEVSGLSVRL…ATMLSVFGCA (240 aa)) is the ABC transporter domain. 34 to 41 (GPNGSGKT) is a binding site for ATP.

The protein belongs to the ABC transporter superfamily. Heme (hemin) importer (TC 3.A.1.14.5) family. In terms of assembly, the complex is composed of two ATP-binding proteins (HmuV), two transmembrane proteins (HmuU) and a solute-binding protein (HmuT).

The protein resides in the cell inner membrane. In terms of biological role, part of the ABC transporter complex HmuTUV involved in hemin import. Responsible for energy coupling to the transport system. The sequence is that of Hemin import ATP-binding protein HmuV from Rhizobium etli (strain ATCC 51251 / DSM 11541 / JCM 21823 / NBRC 15573 / CFN 42).